The primary structure comprises 160 residues: NAD(P)H-quinone oxidoreductase subunit I, chloroplastic (160 aa).

2 consecutive 4Fe-4S ferredoxin-type domains span residues 55-84 (GRIHFEFDKCIACEVCVRVCPIDLPVVDWK) and 95-124 (LNYSIDFGICIFCGNCVEYCPTNCLSMTEE). Residues C64, C67, C70, C74, C104, C107, C110, and C114 each contribute to the [4Fe-4S] cluster site.

This sequence belongs to the complex I 23 kDa subunit family. NDH is composed of at least 16 different subunits, 5 of which are encoded in the nucleus. It depends on [4Fe-4S] cluster as a cofactor.

It is found in the plastid. Its subcellular location is the chloroplast thylakoid membrane. The catalysed reaction is a plastoquinone + NADH + (n+1) H(+)(in) = a plastoquinol + NAD(+) + n H(+)(out). The enzyme catalyses a plastoquinone + NADPH + (n+1) H(+)(in) = a plastoquinol + NADP(+) + n H(+)(out). NDH shuttles electrons from NAD(P)H:plastoquinone, via FMN and iron-sulfur (Fe-S) centers, to quinones in the photosynthetic chain and possibly in a chloroplast respiratory chain. The immediate electron acceptor for the enzyme in this species is believed to be plastoquinone. Couples the redox reaction to proton translocation, and thus conserves the redox energy in a proton gradient. The sequence is that of NAD(P)H-quinone oxidoreductase subunit I, chloroplastic from Cucumis sativus (Cucumber).